The primary structure comprises 134 residues: Large ribosomal subunit protein uL16c (134 aa).

The span at 1-17 (MLSPKRTRFRKQHRGRM) shows a compositional bias: basic residues. The segment at 1 to 22 (MLSPKRTRFRKQHRGRMKGISS) is disordered.

The protein belongs to the universal ribosomal protein uL16 family. In terms of assembly, part of the 50S ribosomal subunit.

Its subcellular location is the plastid. The protein resides in the chloroplast. This is Large ribosomal subunit protein uL16c from Solanum tuberosum (Potato).